Consider the following 215-residue polypeptide: AN1-type zinc finger protein C1271.05c (215 aa).

Residues 116–128 (IPSISKSNLTNPP) show a composition bias toward polar residues. Positions 116-138 (IPSISKSNLTNPPLESEKSSDKA) are disordered. An AN1-type zinc finger spans residues 144 to 193 (ATSRRRCCHPTCTRITLRLAGNCLHCNGRFCAAHRLMEDHDCVALFSLRK). 8 residues coordinate Zn(2+): C150, C155, C166, C169, C174, H177, H183, and C185.

It localises to the cytoplasm. The protein localises to the nucleus. This chain is AN1-type zinc finger protein C1271.05c, found in Schizosaccharomyces pombe (strain 972 / ATCC 24843) (Fission yeast).